A 1441-amino-acid polypeptide reads, in one-letter code: ABC transporter G family member 41 (1441 aa).

Basic and acidic residues predominate over residues 1-14 (MEDKKQQQQQQREE). A disordered region spans residues 1 to 28 (MEDKKQQQQQQREEAEAEEEAPVVPSSL). The 274-residue stretch at 159 to 432 (ATARGLSRRP…FESCGFKCPE (274 aa)) folds into the ABC transporter 1 domain. 192-199 (GPPGCGKT) is a binding site for ATP. An ABC transmembrane type-2 1 domain is found at 510 to 722 (DLLKACFARE…AEIGLTGNEF (213 aa)). Helical transmembrane passes span 528–548 (FIYITKVVQLGLLAVITGTVF), 566–586 (SLFYALILLLVNGFPELAIAV), 600–620 (FYPAWAYAIPSFILKIPLSLV), 642–662 (FFCQLLILFLVHTGALSLFRC), 672–692 (ASSVGGTMSFLVILLFGGFII), and 758–778 (ASALIGFILLLNVGYAIGLTI). In terms of domain architecture, ABC transporter 2 spans 838 to 1090 (ISFQDVNYYV…NVIHYFETIP (253 aa)). 883–890 (GVTGAGKT) is a binding site for ATP. The ABC transmembrane type-2 2 domain occupies 1163–1379 (EQLKACIWKQ…TLNVFFTTQF (217 aa)). The next 7 membrane-spanning stretches (helical) occupy residues 1187 to 1207 (ILFITISCIVFGVLFWQQGDI), 1215 to 1235 (GLFTILGCMYGTTLFTGINNC), 1272 to 1292 (IPYVLVQILLIMFIAYPMIGY), 1300 to 1320 (FWFMYTIACTLLYFLYFGMMI), 1329 to 1349 (VASILASMFYTLQNLMSGFIV), 1357 to 1377 (WWIWLYYTSPLSWTLNVFFTT), and 1413 to 1433 (LAAIILAMFPILFAILFGLSI).

Belongs to the ABC transporter superfamily. ABCG family. PDR (TC 3.A.1.205) subfamily.

Its subcellular location is the membrane. Functionally, may be a general defense protein. The polypeptide is ABC transporter G family member 41 (Oryza sativa subsp. japonica (Rice)).